The chain runs to 188 residues: Elongation factor P-like protein (188 aa).

This sequence belongs to the elongation factor P family.

The chain is Elongation factor P-like protein from Aliivibrio fischeri (strain ATCC 700601 / ES114) (Vibrio fischeri).